We begin with the raw amino-acid sequence, 364 residues long: 4-hydroxythreonine-4-phosphate dehydrogenase (364 aa).

Substrate-binding residues include H138 and T139. The a divalent metal cation site is built by H169, H214, and H269. Residues K277, N286, and R295 each contribute to the substrate site.

Belongs to the PdxA family. Homodimer. It depends on a divalent metal cation as a cofactor.

It localises to the cytoplasm. It carries out the reaction 4-(phosphooxy)-L-threonine + NAD(+) = 3-amino-2-oxopropyl phosphate + CO2 + NADH. It functions in the pathway cofactor biosynthesis; pyridoxine 5'-phosphate biosynthesis; pyridoxine 5'-phosphate from D-erythrose 4-phosphate: step 4/5. In terms of biological role, catalyzes the NAD(P)-dependent oxidation of 4-(phosphooxy)-L-threonine (HTP) into 2-amino-3-oxo-4-(phosphooxy)butyric acid which spontaneously decarboxylates to form 3-amino-2-oxopropyl phosphate (AHAP). The chain is 4-hydroxythreonine-4-phosphate dehydrogenase from Bacteroides thetaiotaomicron (strain ATCC 29148 / DSM 2079 / JCM 5827 / CCUG 10774 / NCTC 10582 / VPI-5482 / E50).